The primary structure comprises 324 residues: UDP-N-acetylenolpyruvoylglucosamine reductase (324 aa).

The 194-residue stretch at 38–231 (AGGSARRLYV…SRERIRSLLK (194 aa)) folds into the FAD-binding PCMH-type domain. Arg195 is a catalytic residue. Ser246 (proton donor) is an active-site residue. Glu316 is an active-site residue.

The protein belongs to the MurB family. FAD serves as cofactor.

Its subcellular location is the cytoplasm. The enzyme catalyses UDP-N-acetyl-alpha-D-muramate + NADP(+) = UDP-N-acetyl-3-O-(1-carboxyvinyl)-alpha-D-glucosamine + NADPH + H(+). The protein operates within cell wall biogenesis; peptidoglycan biosynthesis. Cell wall formation. In Thiobacillus denitrificans (strain ATCC 25259 / T1), this protein is UDP-N-acetylenolpyruvoylglucosamine reductase.